The following is a 383-amino-acid chain: UDP-N-acetylenolpyruvoylglucosamine reductase (383 aa).

An FAD-binding PCMH-type domain is found at 42–212; the sequence is LSCQAMQLIT…TRVGFKLHKD (171 aa). Arg189 is an active-site residue. Ser267 (proton donor) is an active-site residue. Residue Glu369 is part of the active site.

Belongs to the MurB family. FAD serves as cofactor.

It is found in the cytoplasm. The catalysed reaction is UDP-N-acetyl-alpha-D-muramate + NADP(+) = UDP-N-acetyl-3-O-(1-carboxyvinyl)-alpha-D-glucosamine + NADPH + H(+). It functions in the pathway cell wall biogenesis; peptidoglycan biosynthesis. In terms of biological role, cell wall formation. In Psychrobacter sp. (strain PRwf-1), this protein is UDP-N-acetylenolpyruvoylglucosamine reductase.